Reading from the N-terminus, the 242-residue chain is Purine nucleoside phosphorylase SCO2081 (242 aa).

Zn(2+) contacts are provided by His68, Cys106, and His123.

It belongs to the purine nucleoside phosphorylase YfiH/LACC1 family. Homodimer. Cu(2+) serves as cofactor. Zn(2+) is required as a cofactor.

The enzyme catalyses adenosine + phosphate = alpha-D-ribose 1-phosphate + adenine. It catalyses the reaction S-methyl-5'-thioadenosine + phosphate = 5-(methylsulfanyl)-alpha-D-ribose 1-phosphate + adenine. The catalysed reaction is inosine + phosphate = alpha-D-ribose 1-phosphate + hypoxanthine. It carries out the reaction adenosine + H2O + H(+) = inosine + NH4(+). Its function is as follows. Purine nucleoside enzyme that catalyzes the phosphorolysis of adenosine and inosine nucleosides, yielding D-ribose 1-phosphate and the respective free bases, adenine and hypoxanthine. Also catalyzes the phosphorolysis of S-methyl-5'-thioadenosine into adenine and S-methyl-5-thio-alpha-D-ribose 1-phosphate. Also has adenosine deaminase activity. The sequence is that of Purine nucleoside phosphorylase SCO2081 from Streptomyces coelicolor (strain ATCC BAA-471 / A3(2) / M145).